The chain runs to 602 residues: GTP-binding protein 2 (602 aa).

Residues 16–64 (GGGPAVGGTLKARGAGSSSGCGGPKGKKKNGRNRGGKANNPPYLPPEAE) are disordered. A compositionally biased stretch (basic residues) spans 40–50 (KGKKKNGRNRG). The tr-type G domain maps to 170 to 398 (FLDLRVAVLG…LNILPPLTNS (229 aa)). GTP contacts are provided by residues 179-186 (GNVDSGKS), 260-264 (DLAGH), and 316-319 (SKID).

Belongs to the TRAFAC class translation factor GTPase superfamily. Classic translation factor GTPase family. GTPBP1 subfamily. In terms of tissue distribution, predominantly expressed in thymus, spleen, and testis. Expressed at lower levels in brain, lung, kidney, and ovary.

This chain is GTP-binding protein 2, found in Homo sapiens (Human).